The chain runs to 256 residues: uncharacterized protein (256 aa).

Residues 10–64 (IRALRESRDWSLADLAAATGVSTMGLSYLERGARKPHKSTVQKVENGLGLPPGTY) form the HTH cro/C1-type domain. The segment at residues 21-40 (LADLAAATGVSTMGLSYLER) is a DNA-binding region (H-T-H motif).

This is an uncharacterized protein from Mycobacterium bovis (strain ATCC BAA-935 / AF2122/97).